The primary structure comprises 393 residues: MYKAFLIKYGEIGVKGKNRFIFEDALVRQIKFSLKDVEGEFDVRRADGRIYVNALADYDYDEVIESLTRVFGIVGICPVVQIEDNGFDDLANQVINYLDKAYKNKNLTFKVNARRTRKNYPMNSMEINMELGGRILDAFPEMKVDVHKPEVLLQVEIRGDVINIYSIEVPGPGGMPIGTAGKAMLLLSGGIDSPVAGYMVAKRGVQIEATYFHAPPYTSERAKQKVIDLAKIVSKYSGPITLNVVNFTDIQMAIYEKCPHDELTIIMRRYMMKIAEDLGKSSGCQGLVTGESIGQVASQTMASLYCTNEVCTMPVFRPVIGFDKQEIIDISEKIGSYETSIQPFEDCCTIFVAKHPVTKPNLNIIKQHETNLDGVIEELYKTAIETTEKIVIE.

Positions 61–168 (DEVIESLTRV…GDVINIYSIE (108 aa)) constitute a THUMP domain. Residues 186–187 (LL), 211–212 (YF), Arg268, Gly290, and Gln299 contribute to the ATP site.

This sequence belongs to the ThiI family.

It localises to the cytoplasm. It carries out the reaction [ThiI sulfur-carrier protein]-S-sulfanyl-L-cysteine + a uridine in tRNA + 2 reduced [2Fe-2S]-[ferredoxin] + ATP + H(+) = [ThiI sulfur-carrier protein]-L-cysteine + a 4-thiouridine in tRNA + 2 oxidized [2Fe-2S]-[ferredoxin] + AMP + diphosphate. The enzyme catalyses [ThiS sulfur-carrier protein]-C-terminal Gly-Gly-AMP + S-sulfanyl-L-cysteinyl-[cysteine desulfurase] + AH2 = [ThiS sulfur-carrier protein]-C-terminal-Gly-aminoethanethioate + L-cysteinyl-[cysteine desulfurase] + A + AMP + 2 H(+). Its pathway is cofactor biosynthesis; thiamine diphosphate biosynthesis. Functionally, catalyzes the ATP-dependent transfer of a sulfur to tRNA to produce 4-thiouridine in position 8 of tRNAs, which functions as a near-UV photosensor. Also catalyzes the transfer of sulfur to the sulfur carrier protein ThiS, forming ThiS-thiocarboxylate. This is a step in the synthesis of thiazole, in the thiamine biosynthesis pathway. The sulfur is donated as persulfide by IscS. The protein is Probable tRNA sulfurtransferase of Lachnospira eligens (strain ATCC 27750 / DSM 3376 / VPI C15-48 / C15-B4) (Eubacterium eligens).